The primary structure comprises 260 residues: Ribonuclease PH (260 aa).

Phosphate contacts are provided by residues Arg-87 and 125 to 127 (GTR). The interval 232–260 (LAAPPAAGPPAPERAGAGSGSGGKGTGSR) is disordered. The segment covering 248-260 (AGSGSGGKGTGSR) has biased composition (gly residues).

The protein belongs to the RNase PH family. Homohexameric ring arranged as a trimer of dimers.

The enzyme catalyses tRNA(n+1) + phosphate = tRNA(n) + a ribonucleoside 5'-diphosphate. Functionally, phosphorolytic 3'-5' exoribonuclease that plays an important role in tRNA 3'-end maturation. Removes nucleotide residues following the 3'-CCA terminus of tRNAs; can also add nucleotides to the ends of RNA molecules by using nucleoside diphosphates as substrates, but this may not be physiologically important. Probably plays a role in initiation of 16S rRNA degradation (leading to ribosome degradation) during starvation. The polypeptide is Ribonuclease PH (Parafrankia sp. (strain EAN1pec)).